We begin with the raw amino-acid sequence, 75 residues long: UPF0291 protein lmo1304 (75 aa).

A disordered region spans residues 56 to 75; that stretch reads DPNGKDVTPHKVKQLRKNKY. A compositionally biased stretch (basic residues) spans 65 to 75; sequence HKVKQLRKNKY.

It belongs to the UPF0291 family.

Its subcellular location is the cytoplasm. The polypeptide is UPF0291 protein lmo1304 (Listeria monocytogenes serovar 1/2a (strain ATCC BAA-679 / EGD-e)).